Reading from the N-terminus, the 539-residue chain is MANIDLSQYGITGTTGILHNPSYKTLFEEETKEGLTGYEQGQVSELGAVNVKTGIFTGRSPKDKFIVDDETSHDTVWWDSEDYHNDNHRATPETWNALKEIAKKELSNKKLYVVDAFCGANKDTRMAVRFIVEVAWQAHFVTNMFIQPTEEELANFKPDFVVYNASKAKVENYKELGLHSETAVVFNLTSREQVIINTWYGGEMKKGMFSMMNYFLPLKGIAAMHCSANTDKQGQNTAIFFGLSGTGKTTLSTDPKRLLIGDDEHGWDDEGVFNFEGGCYAKVINLDMESEPDIYGAIKRNALLENVTLDDKGNIDFADKTITENTRVSYPIDHIKGTVKGFVNDKSAAPAAKSVIFLSADAFGVLPPVSILTPEQTKYYFLSGFTAKLAGTERGITEPTPTFSACFGQAFLELHPTKYAEELVKKMEANGTKAYLVNTGWNGSGKRISIKDTRGIIDAIHSGAIKKAPTKKIPFFNLEVPTELEGVDTNILDPKDTYANPADWEAKAKDLAQRFIKNFDKYTKNNEAGKALVAAGPQL.

Substrate-binding residues include Arg59, Tyr200, and Lys206. ATP is bound by residues Lys206, His225, and 242–250 (GLSGTGKTT). Mn(2+)-binding residues include Lys206 and His225. Asp263 is a binding site for Mn(2+). ATP is bound by residues Glu291, Arg327, 447–448 (RI), and Thr453. Residue Arg327 coordinates substrate.

The protein belongs to the phosphoenolpyruvate carboxykinase (ATP) family. Mn(2+) serves as cofactor.

The protein localises to the cytoplasm. It carries out the reaction oxaloacetate + ATP = phosphoenolpyruvate + ADP + CO2. The protein operates within carbohydrate biosynthesis; gluconeogenesis. In terms of biological role, involved in the gluconeogenesis. Catalyzes the conversion of oxaloacetate (OAA) to phosphoenolpyruvate (PEP) through direct phosphoryl transfer between the nucleoside triphosphate and OAA. In Selenomonas ruminantium, this protein is Phosphoenolpyruvate carboxykinase (ATP).